The following is a 185-amino-acid chain: Ribosome-recycling factor (185 aa).

It belongs to the RRF family.

The protein resides in the cytoplasm. Responsible for the release of ribosomes from messenger RNA at the termination of protein biosynthesis. May increase the efficiency of translation by recycling ribosomes from one round of translation to another. This is Ribosome-recycling factor from Shewanella denitrificans (strain OS217 / ATCC BAA-1090 / DSM 15013).